A 479-amino-acid polypeptide reads, in one-letter code: Probable periplasmic serine endoprotease DegP-like (479 aa).

The N-terminal stretch at Met-1–Ala-27 is a signal peptide. The disordered stretch occupies residues Leu-77–Thr-99. Residues His-119, Asp-149, and Ser-222 each act as charge relay system in the active site. Residues Gly-220–Ser-222 and Leu-277–Ile-281 contribute to the substrate site. PDZ domains are found at residues Leu-266–Gly-357 and Thr-363–Gly-468.

Belongs to the peptidase S1C family.

It localises to the periplasm. It catalyses the reaction Acts on substrates that are at least partially unfolded. The cleavage site P1 residue is normally between a pair of hydrophobic residues, such as Val-|-Val.. Its function is as follows. Might be efficient in the degradation of transiently denatured and unfolded proteins which accumulate in the periplasm following stress conditions. The sequence is that of Probable periplasmic serine endoprotease DegP-like (mucD) from Pseudomonas savastanoi pv. phaseolicola (strain 1448A / Race 6) (Pseudomonas syringae pv. phaseolicola (strain 1448A / Race 6)).